Here is a 351-residue protein sequence, read N- to C-terminus: 1-acylglycerol-3-phosphate O-acyltransferase ABHD5 (351 aa).

The region spanning Pro-79 to Pro-184 is the AB hydrolase-1 domain. Ser-124 carries the phosphoserine modification. Residues His-329 to Asp-334 carry the HXXXXD motif motif.

It belongs to the peptidase S33 family. ABHD4/ABHD5 subfamily. In terms of assembly, interacts with ADRP. Interacts with PLIN. Interacts with and PNPLA2. Interacts with PLIN5; promotes interaction with PNPLA2. Highly expressed in the adipose tissue and testes. Weakly expressed in the liver, muscle, kidney, and heart. Expressed by upper epidermal layers and dermal fibroblasts in skin, hepatocytes and hypothalamus in brain (at protein level).

The protein localises to the cytoplasm. Its subcellular location is the lipid droplet. It is found in the cytosol. The enzyme catalyses a 1-acyl-sn-glycero-3-phosphate + an acyl-CoA = a 1,2-diacyl-sn-glycero-3-phosphate + CoA. It carries out the reaction 1-(9Z-octadecenoyl)-sn-glycero-3-phosphate + (9Z)-octadecenoyl-CoA = 1,2-di-(9Z-octadecenoyl)-sn-glycero-3-phosphate + CoA. The catalysed reaction is 1-(9Z-octadecenoyl)-sn-glycero-3-phosphate + hexadecanoyl-CoA = 1-(9Z)-octadecenoyl-2-hexadecanoyl-sn-glycero-3-phosphate + CoA. It catalyses the reaction 1-(9Z-octadecenoyl)-sn-glycero-3-phosphate + octadecanoyl-CoA = 1-(9Z-octadecenoyl)-2-octadecanoyl-sn-glycero-3-phosphate + CoA. The enzyme catalyses 1-(9Z-octadecenoyl)-sn-glycero-3-phosphate + (5Z,8Z,11Z,14Z)-eicosatetraenoyl-CoA = 1-(9Z)-octadecenoyl-2-(5Z,8Z,11Z,14Z)-eicosatetraenoyl-sn-glycero-3-phosphate + CoA. It carries out the reaction eicosanoyl-CoA + 1-(9Z-octadecenoyl)-sn-glycero-3-phosphate = 1-(9Z)-octadecenoyl-2-eicosanoyl-sn-glycero-3-phosphate + CoA. The catalysed reaction is 1-hexadecanoyl-sn-glycero-3-phosphate + (9Z)-octadecenoyl-CoA = 1-hexadecanoyl-2-(9Z-octadecenoyl)-sn-glycero-3-phosphate + CoA. It catalyses the reaction 1-octadecanoyl-sn-glycero-3-phosphate + (9Z)-octadecenoyl-CoA = 1-octadecanoyl-2-(9Z-octadecenoyl)-sn-glycero-3-phosphate + CoA. The enzyme catalyses 1-(5Z,8Z,11Z,14Z-eicosatetraenoyl)-sn-glycero-3-phosphate + (9Z)-octadecenoyl-CoA = 1-(5Z,8Z,11Z,14Z)-eicosatetraenoyl-2-(9Z)-octadecenoyl-sn-glycero-3-phosphate + CoA. Acyltransferase activity is inhibited by detergents such as Triton X-100 and 3-[(3-cholamidopropyl)dimethylammonio]-1-propanesulfonate (CHAPS). Acyltransferase activity is inhibited by the presence of magnesium and calcium. Coenzyme A-dependent lysophosphatidic acid acyltransferase that catalyzes the transfer of an acyl group on a lysophosphatidic acid. Functions preferentially with 1-oleoyl-lysophosphatidic acid followed by 1-palmitoyl-lysophosphatidic acid, 1-stearoyl-lysophosphatidic acid and 1-arachidonoyl-lysophosphatidic acid as lipid acceptor. Functions preferentially with arachidonoyl-CoA followed by oleoyl-CoA as acyl group donors. Functions in phosphatidic acid biosynthesis. May regulate the cellular storage of triacylglycerol through activation of the phospholipase PNPLA2. Involved in keratinocyte differentiation. Regulates lipid droplet fusion. In Mus musculus (Mouse), this protein is 1-acylglycerol-3-phosphate O-acyltransferase ABHD5.